A 765-amino-acid chain; its full sequence is Phosphoribosylformylglycinamidine synthase subunit PurL (765 aa).

His-57 is a catalytic residue. The ATP site is built by Tyr-60 and Arg-104. Residue Glu-106 participates in Mg(2+) binding. Residues 107–110 and Arg-129 contribute to the substrate site; that span reads SHNH. His-108 (proton acceptor) is an active-site residue. Position 130 (Asp-130) interacts with Mg(2+). Gln-254 lines the substrate pocket. Residue Asp-282 coordinates Mg(2+). 326–328 contacts substrate; that stretch reads ESQ. ATP-binding residues include Asn-508 and Gly-545. Asn-546 lines the Mg(2+) pocket. Residue Ser-548 participates in substrate binding.

It belongs to the FGAMS family. As to quaternary structure, monomer. Part of the FGAM synthase complex composed of 1 PurL, 1 PurQ and 2 PurS subunits.

The protein resides in the cytoplasm. The enzyme catalyses N(2)-formyl-N(1)-(5-phospho-beta-D-ribosyl)glycinamide + L-glutamine + ATP + H2O = 2-formamido-N(1)-(5-O-phospho-beta-D-ribosyl)acetamidine + L-glutamate + ADP + phosphate + H(+). The protein operates within purine metabolism; IMP biosynthesis via de novo pathway; 5-amino-1-(5-phospho-D-ribosyl)imidazole from N(2)-formyl-N(1)-(5-phospho-D-ribosyl)glycinamide: step 1/2. Part of the phosphoribosylformylglycinamidine synthase complex involved in the purines biosynthetic pathway. Catalyzes the ATP-dependent conversion of formylglycinamide ribonucleotide (FGAR) and glutamine to yield formylglycinamidine ribonucleotide (FGAM) and glutamate. The FGAM synthase complex is composed of three subunits. PurQ produces an ammonia molecule by converting glutamine to glutamate. PurL transfers the ammonia molecule to FGAR to form FGAM in an ATP-dependent manner. PurS interacts with PurQ and PurL and is thought to assist in the transfer of the ammonia molecule from PurQ to PurL. This Corynebacterium aurimucosum (strain ATCC 700975 / DSM 44827 / CIP 107346 / CN-1) (Corynebacterium nigricans) protein is Phosphoribosylformylglycinamidine synthase subunit PurL.